A 613-amino-acid chain; its full sequence is MPVDDCWLYFPASRGRTFVQTVWVAPTCPNCCWFPGFLPPVPRPPHVPRVLLRGPRGAVLPASRPSKTLPSSSQTPCPTDPCICPPPSTPDSRQEKNTQSELPNKKGQLQKLPTMNGSKDPPGSYDFDLIIIGGGSGGLAAAKEAAKFDKKVLVLDFVTPTPLGTRWGLGGTCVNVGCIPKKLMHQAALLGQALKDSRNYGWKVEDTVKHDWEKMTESVQSHIGSLNWGYRVALREKKVVYENAYGRFIGPHRIVATNNKGKEKIYSAERFLIATGERPRYLGIPGDKEYCISSDDLFSLPYCPGKTLVVGASYVALECAGFLAGIGLDVTVMVRSILLRGFDQDMANKIGEHMEEHGIKFIRQFVPTKIEQIEAGTPGRLRVTAQSTNSEETIEGEFNTVLLAVGRDSCTRTIGLETVGVKINEKTGKIPVTDEEQTNVPYIYAIGDILEGKLELTPVAIQAGRLLAQRLYGGSNVKCDYDNVPTTVFTPLEYGCCGLSEEKAVEKFGEENIEVYHSFFWPLEWTVPSRDNNKCYAKIICNLKDDERVVGFHVLGPNAGEVTQGFAAALKCGLTKQQLDSTIGIHPVCAEIFTTLSVTKRSGGDILQSGCUG.

Residues 58–121 (AVLPASRPSK…LPTMNGSKDP (64 aa)) are disordered. A compositionally biased stretch (polar residues) spans 65–74 (PSKTLPSSSQ). FAD-binding positions include 136 to 137 (SG), 156 to 157 (DF), 172 to 173 (TC), and 177 to 181 (GCIPK). Cysteine 173 and cysteine 178 are oxidised to a cystine. An N6-succinyllysine modification is found at lysine 182. Tyrosine 245 is subject to Phosphotyrosine. Residues 245–246 (YG) and threonine 275 contribute to the FAD site. NADP(+) contacts are provided by residues arginine 280, 312–318 (ASYVALE), 335–336 (RS), arginine 340, 340–342 (RGF), 406–407 (GR), and lysine 429. Tyrosine 314 is an FAD binding site. Residues aspartate 448, 455 to 457 (ELT), and histidine 586 each bind FAD. Glutamate 455 provides a ligand contact to NADP(+). The active-site Proton acceptor is histidine 586. The segment at residues 611–612 (CU) is a cross-link (cysteinyl-selenocysteine (Cys-Sec)). Position 612 (selenocysteine 612) is a non-standard amino acid, selenocysteine.

It belongs to the class-I pyridine nucleotide-disulfide oxidoreductase family. As to quaternary structure, homodimer. FAD is required as a cofactor. ISGylated.

The protein resides in the cytoplasm. The enzyme catalyses [thioredoxin]-dithiol + NADP(+) = [thioredoxin]-disulfide + NADPH + H(+). It catalyses the reaction H2O2 + NADPH + H(+) = NADP(+) + 2 H2O. Functionally, reduces disulfideprotein thioredoxin (Trx) to its dithiol-containing form. Homodimeric flavoprotein involved in the regulation of cellular redox reactions, growth and differentiation. Contains a selenocysteine residue at the C-terminal active site that is essential for catalysis. Also has reductase activity on hydrogen peroxide (H2O2). The polypeptide is Thioredoxin reductase 1, cytoplasmic (Mus musculus (Mouse)).